Reading from the N-terminus, the 193-residue chain is Ribosome maturation factor RimM (193 aa).

One can recognise a PRC barrel domain in the interval 112 to 193 (VDEYYWIDLI…CITVDWGLDF (82 aa)).

Belongs to the RimM family. Binds ribosomal protein uS19.

The protein resides in the cytoplasm. An accessory protein needed during the final step in the assembly of 30S ribosomal subunit, possibly for assembly of the head region. Essential for efficient processing of 16S rRNA. May be needed both before and after RbfA during the maturation of 16S rRNA. It has affinity for free ribosomal 30S subunits but not for 70S ribosomes. This is Ribosome maturation factor RimM from Methylibium petroleiphilum (strain ATCC BAA-1232 / LMG 22953 / PM1).